The primary structure comprises 457 residues: Siroheme synthase (457 aa).

The interval 1–204 is precorrin-2 dehydrogenase /sirohydrochlorin ferrochelatase; it reads MDHLPIFCQL…ADEKAVNATT (204 aa). NAD(+)-binding positions include 22-23 and 43-44; these read DV and LT. Ser-128 is subject to Phosphoserine. A uroporphyrinogen-III C-methyltransferase region spans residues 216 to 457; sequence GEVVLVGAGP…RDKLNWFSNY (242 aa). Pro-225 is a binding site for S-adenosyl-L-methionine. Asp-248 acts as the Proton acceptor in catalysis. Lys-270 serves as the catalytic Proton donor. Residues 301–303, Ile-306, 331–332, Met-382, and Gly-411 each bind S-adenosyl-L-methionine; these read GGD and TA.

It in the N-terminal section; belongs to the precorrin-2 dehydrogenase / sirohydrochlorin ferrochelatase family. In the C-terminal section; belongs to the precorrin methyltransferase family.

It carries out the reaction uroporphyrinogen III + 2 S-adenosyl-L-methionine = precorrin-2 + 2 S-adenosyl-L-homocysteine + H(+). The catalysed reaction is precorrin-2 + NAD(+) = sirohydrochlorin + NADH + 2 H(+). It catalyses the reaction siroheme + 2 H(+) = sirohydrochlorin + Fe(2+). It functions in the pathway cofactor biosynthesis; adenosylcobalamin biosynthesis; precorrin-2 from uroporphyrinogen III: step 1/1. Its pathway is cofactor biosynthesis; adenosylcobalamin biosynthesis; sirohydrochlorin from precorrin-2: step 1/1. The protein operates within porphyrin-containing compound metabolism; siroheme biosynthesis; precorrin-2 from uroporphyrinogen III: step 1/1. It participates in porphyrin-containing compound metabolism; siroheme biosynthesis; siroheme from sirohydrochlorin: step 1/1. It functions in the pathway porphyrin-containing compound metabolism; siroheme biosynthesis; sirohydrochlorin from precorrin-2: step 1/1. Functionally, multifunctional enzyme that catalyzes the SAM-dependent methylations of uroporphyrinogen III at position C-2 and C-7 to form precorrin-2 via precorrin-1. Then it catalyzes the NAD-dependent ring dehydrogenation of precorrin-2 to yield sirohydrochlorin. Finally, it catalyzes the ferrochelation of sirohydrochlorin to yield siroheme. This Salmonella dublin (strain CT_02021853) protein is Siroheme synthase.